The primary structure comprises 574 residues: Kelch-like protein 18 (574 aa).

Residues 66-105 (MFTNDMMECKQDEIVMQGMDPSALEALINFAYNGNLAIDQ) form the BTB domain. The BACK domain occupies 140-242 (CLGVRQFAET…RPQFLSDRVQ (103 aa)). Kelch repeat units follow at residues 289–336 (LIYA…VVNG), 337–383 (LLYA…VLDG), 384–430 (QIYV…VFEG), 432–477 (IYVS…SLGS), 479–524 (MFVC…ASCG), and 525–571 (RLYA…CIPL).

In terms of assembly, interacts with AURKA. Interacts (via BTB domain) with CUL3. Interacts (via kelch repeats) with UNC119.

It functions in the pathway protein modification; protein ubiquitination. Functionally, substrate-specific adapter of a BCR (BTB-CUL3-RBX1) E3 ubiquitin-protein ligase complex required for mitotic progression and cytokinesis. The BCR(KLHL18) E3 ubiquitin ligase complex mediates the ubiquitination of AURKA leading to its activation at the centrosome which is required for initiating mitotic entry. Regulates light-and dark-dependent alpha-transducin localization changes in rod photoreceptors through UNC119 ubiquitination and degradation. Preferentially ubiquitinates the unphosphorylated form of UNC119 over the phosphorylated form. In the presence of UNC119, under dark-adapted conditions alpha-transducin mislocalizes from the outer segment to the inner part of rod photoreceptors which leads to decreased photoreceptor damage caused by light. This is Kelch-like protein 18 (KLHL18) from Homo sapiens (Human).